Consider the following 261-residue polypeptide: Serine acetyltransferase (261 aa).

This sequence belongs to the transferase hexapeptide repeat family.

It localises to the cytoplasm. It catalyses the reaction L-serine + acetyl-CoA = O-acetyl-L-serine + CoA. Its pathway is amino-acid biosynthesis; L-cysteine biosynthesis; L-cysteine from L-serine: step 1/2. The protein is Serine acetyltransferase (cysE) of Buchnera aphidicola subsp. Schizaphis graminum (strain Sg).